The following is a 238-amino-acid chain: Orotidine 5'-phosphate decarboxylase (238 aa).

Residues aspartate 10, lysine 32, 59-68 (DLKLHDIPNT), threonine 122, arginine 184, glutamine 193, glycine 213, and arginine 214 each bind substrate. The active-site Proton donor is lysine 61.

It belongs to the OMP decarboxylase family. Type 1 subfamily. As to quaternary structure, homodimer.

It carries out the reaction orotidine 5'-phosphate + H(+) = UMP + CO2. It participates in pyrimidine metabolism; UMP biosynthesis via de novo pathway; UMP from orotate: step 2/2. Its function is as follows. Catalyzes the decarboxylation of orotidine 5'-monophosphate (OMP) to uridine 5'-monophosphate (UMP). This is Orotidine 5'-phosphate decarboxylase from Bacillus mycoides (strain KBAB4) (Bacillus weihenstephanensis).